The sequence spans 238 residues: Ribonuclease PH (238 aa).

Phosphate contacts are provided by residues arginine 86 and 124–126 (GTR).

It belongs to the RNase PH family. Homohexameric ring arranged as a trimer of dimers.

The catalysed reaction is tRNA(n+1) + phosphate = tRNA(n) + a ribonucleoside 5'-diphosphate. Functionally, phosphorolytic 3'-5' exoribonuclease that plays an important role in tRNA 3'-end maturation. Removes nucleotide residues following the 3'-CCA terminus of tRNAs; can also add nucleotides to the ends of RNA molecules by using nucleoside diphosphates as substrates, but this may not be physiologically important. Probably plays a role in initiation of 16S rRNA degradation (leading to ribosome degradation) during starvation. In Klebsiella pneumoniae (strain 342), this protein is Ribonuclease PH.